The primary structure comprises 453 residues: Pentatricopeptide repeat-containing protein At2g38420, mitochondrial (453 aa).

The N-terminal 77 residues, 1–77 (MARSSSWHRM…CEPTPQAYRF (77 aa)), are a transit peptide targeting the mitochondrion. PPR repeat units follow at residues 107 to 141 (PESI…RCVP), 142 to 177 (SAYT…GVRL), 178 to 212 (EEST…SVIV), 213 to 249 (DPRL…RFSP), 250 to 284 (GLRD…RVEP), 285 to 319 (DLVC…GLAP), 320 to 354 (DVYT…GSEP), 355 to 389 (NVVT…GVNR), and 390 to 424 (NSHT…NVFV).

The protein belongs to the PPR family. P subfamily.

It localises to the mitochondrion. The sequence is that of Pentatricopeptide repeat-containing protein At2g38420, mitochondrial from Arabidopsis thaliana (Mouse-ear cress).